The chain runs to 310 residues: 17-beta-hydroxysteroid dehydrogenase type 3 (310 aa).

48–77 lines the NADP(+) pocket; sequence GQWAVITGAGDGIGKAYSFELAKRGLNVVL. Residue Ser185 participates in substrate binding. The active-site Proton acceptor is Tyr198.

It belongs to the short-chain dehydrogenases/reductases (SDR) family. 17-beta-HSD 3 subfamily. Testis.

It is found in the endoplasmic reticulum. It catalyses the reaction a 17beta-hydroxy steroid + NADP(+) = a 17-oxo steroid + NADPH + H(+). The catalysed reaction is testosterone + NADP(+) = androst-4-ene-3,17-dione + NADPH + H(+). It carries out the reaction 17beta-estradiol + NADP(+) = estrone + NADPH + H(+). The enzyme catalyses 3beta-hydroxyandrost-5-en-17-one + NADPH + H(+) = androst-5-en-3beta,17beta-diol + NADP(+). It catalyses the reaction 17beta-hydroxy-5alpha-androstan-3-one + NADP(+) = 5alpha-androstan-3,17-dione + NADPH + H(+). The catalysed reaction is androsterone + NADPH + H(+) = 5alpha-androstane-3alpha,17beta-diol + NADP(+). It carries out the reaction 3beta-hydroxy-5alpha-androstan-17-one + NADPH + H(+) = 5alpha-androstane-3beta,17beta-diol + NADP(+). The enzyme catalyses androst-4-ene-3,11,17-trione + NADPH + H(+) = 17beta-hydroxyandrost-4-ene-3,11-dione + NADP(+). It catalyses the reaction 11beta-hydroxyandrost-4-ene-3,17-dione + NADPH + H(+) = 11beta,17beta-dihydroxyandrost-4-ene-3-one + NADP(+). It participates in hormone biosynthesis; testosterone biosynthesis. Its pathway is steroid metabolism. Catalyzes the conversion of 17-oxosteroids to 17beta-hydroxysteroids. Favors the reduction of androstenedione to testosterone. Testosterone is the key androgen driving male development and function. Uses NADPH while the two other EDH17B enzymes use NADH. Androgens such as epiandrosterone, dehydroepiandrosterone, androsterone and androstanedione are accepted as substrates and reduced at C-17. Can reduce 11-ketoandrostenedione as well as 11beta-hydroxyandrostenedione at C-17 to the respective testosterone forms. The sequence is that of 17-beta-hydroxysteroid dehydrogenase type 3 from Homo sapiens (Human).